A 378-amino-acid chain; its full sequence is Succinyl-diaminopimelate desuccinylase (378 aa).

His-68 contributes to the Zn(2+) binding site. Asp-70 is an active-site residue. Asp-101 serves as a coordination point for Zn(2+). Glu-135 serves as the catalytic Proton acceptor. Zn(2+)-binding residues include Glu-136, Glu-164, and His-350.

It belongs to the peptidase M20A family. DapE subfamily. In terms of assembly, homodimer. Zn(2+) serves as cofactor. It depends on Co(2+) as a cofactor.

The enzyme catalyses N-succinyl-(2S,6S)-2,6-diaminopimelate + H2O = (2S,6S)-2,6-diaminopimelate + succinate. The protein operates within amino-acid biosynthesis; L-lysine biosynthesis via DAP pathway; LL-2,6-diaminopimelate from (S)-tetrahydrodipicolinate (succinylase route): step 3/3. Functionally, catalyzes the hydrolysis of N-succinyl-L,L-diaminopimelic acid (SDAP), forming succinate and LL-2,6-diaminopimelate (DAP), an intermediate involved in the bacterial biosynthesis of lysine and meso-diaminopimelic acid, an essential component of bacterial cell walls. In Vibrio atlanticus (strain LGP32) (Vibrio splendidus (strain Mel32)), this protein is Succinyl-diaminopimelate desuccinylase.